The following is a 63-amino-acid chain: Large ribosomal subunit protein uL29 (63 aa).

This sequence belongs to the universal ribosomal protein uL29 family.

The sequence is that of Large ribosomal subunit protein uL29 from Pseudoalteromonas translucida (strain TAC 125).